The primary structure comprises 126 residues: MSDTQHQVNVRVDTRYLPEQSAPEQNRFAFAYTVTIENRGEVSAQLLSRHWIITDGDGRTQEVRGAGVVGEQPLIAPGAQHTYTSGTVLATRVGSMRGSYQMLGSDGVAFDAAIPVFRLAVPGALH.

The 125-residue stretch at 2 to 126 (SDTQHQVNVR…FRLAVPGALH (125 aa)) folds into the ApaG domain.

The polypeptide is Protein ApaG (Pseudomonas paraeruginosa (strain DSM 24068 / PA7) (Pseudomonas aeruginosa (strain PA7))).